Here is a 610-residue protein sequence, read N- to C-terminus: Membrane protein insertase YidC (610 aa).

A helical membrane pass occupies residues 7 to 27 (FFITIALSILILALWQVFYLG). The segment at 36 to 82 (QARIEEQQRQAQQAAQNRQASSSTGDTPQMPANPDSIPGQGDTKAAG) is disordered. The span at 44-55 (RQAQQAAQNRQA) shows a compositional bias: low complexity. Helical transmembrane passes span 358 to 378 (FDLLIDWGWFYFITKPMFYLI), 387 to 407 (NFGVAILVVTVLLKALFFPLA), 458 to 478 (WPVLVQIPVFFALYKVLYVTI), 510 to 530 (TVPHFLMIGVWPIIMGITMFL), and 546 to 566 (IFTWMPIIFTFMLASFPAGLV).

Belongs to the OXA1/ALB3/YidC family. Type 1 subfamily. As to quaternary structure, interacts with the Sec translocase complex via SecD. Specifically interacts with transmembrane segments of nascent integral membrane proteins during membrane integration.

It is found in the cell inner membrane. In terms of biological role, required for the insertion and/or proper folding and/or complex formation of integral membrane proteins into the membrane. Involved in integration of membrane proteins that insert both dependently and independently of the Sec translocase complex, as well as at least some lipoproteins. Aids folding of multispanning membrane proteins. This is Membrane protein insertase YidC from Brucella suis biovar 1 (strain 1330).